The chain runs to 177 residues: UPF0114 protein HP_0189 (177 aa).

Helical transmembrane passes span 15–35, 54–74, and 145–165; these read WLLA…GYVF, LVLS…VLMV, and PIFW…LAAV.

The protein belongs to the UPF0114 family.

The protein localises to the cell membrane. The chain is UPF0114 protein HP_0189 from Helicobacter pylori (strain ATCC 700392 / 26695) (Campylobacter pylori).